Consider the following 470-residue polypeptide: 3-isopropylmalate dehydratase large subunit (470 aa).

[4Fe-4S] cluster contacts are provided by Cys-349, Cys-409, and Cys-412.

It belongs to the aconitase/IPM isomerase family. LeuC type 1 subfamily. As to quaternary structure, heterodimer of LeuC and LeuD. The cofactor is [4Fe-4S] cluster.

The enzyme catalyses (2R,3S)-3-isopropylmalate = (2S)-2-isopropylmalate. It participates in amino-acid biosynthesis; L-leucine biosynthesis; L-leucine from 3-methyl-2-oxobutanoate: step 2/4. Functionally, catalyzes the isomerization between 2-isopropylmalate and 3-isopropylmalate, via the formation of 2-isopropylmaleate. This Afipia carboxidovorans (strain ATCC 49405 / DSM 1227 / KCTC 32145 / OM5) (Oligotropha carboxidovorans) protein is 3-isopropylmalate dehydratase large subunit.